Reading from the N-terminus, the 328-residue chain is Fructokinase-2 (328 aa).

The protein belongs to the carbohydrate kinase PfkB family.

It carries out the reaction D-fructose + ATP = D-fructose 6-phosphate + ADP + H(+). It participates in glycan biosynthesis; starch biosynthesis. Functionally, may play an important role in maintaining the flux of carbon towards starch formation. The polypeptide is Fructokinase-2 (FRK2) (Solanum habrochaites (Wild tomato)).